Here is a 167-residue protein sequence, read N- to C-terminus: Putative NADH-quinone oxidoreductase subunit B 2 (167 aa).

This sequence belongs to the complex I 20 kDa subunit family. As to quaternary structure, NDH-1 is composed of 14 different subunits. Subunits NuoB, C, D, E, F, and G constitute the peripheral sector of the complex.

Its subcellular location is the cell inner membrane. It carries out the reaction a quinone + NADH + 5 H(+)(in) = a quinol + NAD(+) + 4 H(+)(out). Its function is as follows. NDH-1 shuttles electrons from NADH, via FMN and iron-sulfur (Fe-S) centers, to quinones in the respiratory chain. Couples the redox reaction to proton translocation (for every two electrons transferred, four hydrogen ions are translocated across the cytoplasmic membrane), and thus conserves the redox energy in a proton gradient. In Burkholderia pseudomallei (strain 1710b), this protein is Putative NADH-quinone oxidoreductase subunit B 2.